The sequence spans 138 residues: Putative pre-16S rRNA nuclease (138 aa).

It belongs to the YqgF nuclease family.

It is found in the cytoplasm. Functionally, could be a nuclease involved in processing of the 5'-end of pre-16S rRNA. The polypeptide is Putative pre-16S rRNA nuclease (Bacillus pumilus (strain SAFR-032)).